We begin with the raw amino-acid sequence, 603 residues long: Elongation factor 4 (603 aa).

The region spanning 2-184 (NHIRNFSIIA…AVVALIPAPK (183 aa)) is the tr-type G domain. GTP is bound by residues 14 to 19 (DHGKST) and 131 to 134 (NKMD).

It belongs to the TRAFAC class translation factor GTPase superfamily. Classic translation factor GTPase family. LepA subfamily.

The protein localises to the cell inner membrane. The catalysed reaction is GTP + H2O = GDP + phosphate + H(+). In terms of biological role, required for accurate and efficient protein synthesis under certain stress conditions. May act as a fidelity factor of the translation reaction, by catalyzing a one-codon backward translocation of tRNAs on improperly translocated ribosomes. Back-translocation proceeds from a post-translocation (POST) complex to a pre-translocation (PRE) complex, thus giving elongation factor G a second chance to translocate the tRNAs correctly. Binds to ribosomes in a GTP-dependent manner. This Polaromonas naphthalenivorans (strain CJ2) protein is Elongation factor 4.